A 276-amino-acid chain; its full sequence is Probable endonuclease 4 (276 aa).

Zn(2+)-binding residues include His-67, His-107, Glu-142, Asp-176, His-179, His-211, Asp-224, His-226, and Glu-256.

It belongs to the AP endonuclease 2 family. Zn(2+) serves as cofactor.

The catalysed reaction is Endonucleolytic cleavage to 5'-phosphooligonucleotide end-products.. Endonuclease IV plays a role in DNA repair. It cleaves phosphodiester bonds at apurinic or apyrimidinic (AP) sites, generating a 3'-hydroxyl group and a 5'-terminal sugar phosphate. This is Probable endonuclease 4 from Methanosphaera stadtmanae (strain ATCC 43021 / DSM 3091 / JCM 11832 / MCB-3).